The primary structure comprises 446 residues: Probable D-serine dehydratase (446 aa).

N6-(pyridoxal phosphate)lysine is present on K116.

It belongs to the serine/threonine dehydratase family. DsdA subfamily. Pyridoxal 5'-phosphate is required as a cofactor.

The catalysed reaction is D-serine = pyruvate + NH4(+). The polypeptide is Probable D-serine dehydratase (Bacillus thuringiensis (strain Al Hakam)).